The following is a 62-amino-acid chain: uncharacterized protein (62 aa).

This is an uncharacterized protein from Bacillus subtilis (strain 168).